The primary structure comprises 486 residues: N-succinylglutamate 5-semialdehyde dehydrogenase (486 aa).

NAD(+) is bound at residue 220 to 225 (GSSRTG). Residues Glu-243 and Cys-277 contribute to the active site.

The protein belongs to the aldehyde dehydrogenase family. AstD subfamily.

The enzyme catalyses N-succinyl-L-glutamate 5-semialdehyde + NAD(+) + H2O = N-succinyl-L-glutamate + NADH + 2 H(+). Its pathway is amino-acid degradation; L-arginine degradation via AST pathway; L-glutamate and succinate from L-arginine: step 4/5. Catalyzes the NAD-dependent reduction of succinylglutamate semialdehyde into succinylglutamate. This chain is N-succinylglutamate 5-semialdehyde dehydrogenase, found in Shewanella sp. (strain W3-18-1).